Here is a 414-residue protein sequence, read N- to C-terminus: MANSC domain-containing protein 1 (414 aa).

A signal peptide spans 1–24 (MLFRGTSLAYSLLVISFLTPRSSA). The Extracellular segment spans residues 25 to 369 (GQNCLTKSLE…HGLSFEKWLL (345 aa)). One can recognise an MANSC domain in the interval 32-116 (SLEDVVIDIQ…LKPAKGLVTY (85 aa)). Asn128, Asn234, and Asn335 each carry an N-linked (GlcNAc...) asparagine glycan. Residues 311 to 339 (FQGGSTLTSDPRHGKSSTSESSITNKTAS) form a disordered region. Polar residues predominate over residues 326–338 (SSTSESSITNKTA). A helical membrane pass occupies residues 370–392 (IGTLLCGVLFLVIGLVLLGRMLV). Over 393–414 (EALRRKRYSRLDYLINGIYVDI) the chain is Cytoplasmic.

The protein resides in the membrane. The sequence is that of MANSC domain-containing protein 1 (Mansc1) from Mus musculus (Mouse).